The following is a 1790-amino-acid chain: Non-reducing polyketide synthase gsfA (1790 aa).

Positions 20–263 (GDQRTLFRKL…AMRKIQGMWH (244 aa)) are N-terminal acylcarrier protein transacylase domain (SAT). One can recognise a Ketosynthase family 3 (KS3) domain in the interval 392 to 822 (SSKIAVVGMS…GGNTAMIIEE (431 aa)). Residues Cys563, His698, and His741 each act as for beta-ketoacyl synthase activity in the active site. Residues 922 to 1223 (FAFAGQGTFY…CSTLHRDSDN (302 aa)) are malonyl-CoA:ACP transacylase (MAT) domain. A product template (PT) domain region spans residues 1298 to 1615 (TSSIHRLYSE…PRIMLNRFFQ (318 aa)). An N-terminal hotdog fold region spans residues 1302–1435 (HRLYSENYDS…AYYEDPSTWL (134 aa)). The PKS/mFAS DH domain maps to 1302-1611 (HRLYSENYDS…FRQWPRIMLN (310 aa)). His1334 serves as the catalytic Proton acceptor; for dehydratase activity. Positions 1460 to 1611 (MANKLTTSLA…FRQWPRIMLN (152 aa)) are C-terminal hotdog fold. Asp1518 functions as the Proton donor; for dehydratase activity in the catalytic mechanism. Disordered stretches follow at residues 1621–1648 (PPAPRVEKKRDAGRGTLPSSSSLQEKTT) and 1686–1718 (LDYSLLTPRTSPNSDERIEKTDSDSGFEEADGA). Over residues 1699–1708 (SDERIEKTDS) the composition is skewed to basic and acidic residues. In terms of domain architecture, Carrier spans 1716-1790 (DGANDVTSRA…TIGDLKKLLS (75 aa)). Residue Ser1753 is modified to O-(pantetheine 4'-phosphoryl)serine.

It carries out the reaction 6 malonyl-CoA + acetyl-CoA + 4 H(+) = 2-(2,4-dihydroxy-6-oxidobenzoyl)-5-hydroxy-3-methylbenzenolate + 6 CO2 + 7 CoA + H2O. It functions in the pathway secondary metabolite biosynthesis; terpenoid biosynthesis. Norlichexanthone synthase; part of the gene cluster that mediates the biosynthesis of griseofulvin, an important antifungal drug that has been in use for a long time for treating dermatophyte infections. The first step of the pathway is the formation of the heptaketide backbone by gsfA which is initiated by priming with acetyl-CoA, followed by sequential condensations of 6 malonyl-CoA units. The resulting benzophenone can undergo a spontaneous dehydration to form norlichexanthone. However, the true precursor for the griseofulvin biosynthesis is not norlichexanthone, but the heptaketide benzophenone that is O-methylated at 3-OH by gsfB to produce griseophenone D which is further methylated at 9-OH by gsfC to yield griseophenone C. Griseophenone C is then substrate of halogenase gsfI which is responsible for the regio-specific chlorination at the C13 position to form griseophenone B. The cytochrome P450 gsfF catalyzes the coupling of orcinol and phloroglucinol rings in griseophenone B to form desmethyl-dehydrogriseofulvin A which is further methylated at 5-OH by gsfD to yield dehydrogriseofulvin. Finally, gsfE performs stereospecific reduction of enone 18 of dehydrogriseofulvin to afford the final product griseofulvin. The polypeptide is Non-reducing polyketide synthase gsfA (Penicillium aethiopicum).